The primary structure comprises 331 residues: MKKPVVIGLVIAAIVAVIAGGTWWYQSRQDDGLTLYGNVDIRTVNISFRVGGRLASLNVDEGDTIKAGQVLGELDHAPYENALMQAKAGVSVAQAQYDLMLAGYRDEEIAQAAAAVRQAQAAYDYAQNFYNRQQGLWKSRTISANDLENARSSRDQAQATLKSAQDKLSQYRTGNREQDIAQAKASLEQAKAQLAQAQLDLQDTTLIAPANGTLLTRAVEPGSMLNAGSTVLTLSLTRPVWVRAYVDERNLSQTQPGRDILLYTDGRPDKPYHGKIGFVSPTAEFTPKTVETPDLRTDLVYRLRIIVTDADDALRQGMPVTVKFNDEARHE.

A signal peptide spans Met-1–Ala-19. Residues Arg-140–Pro-209 are a coiled coil.

Belongs to the UPF0194 family.

The protein resides in the periplasm. The sequence is that of UPF0194 membrane protein YbhG (ybhG) from Salmonella typhi.